An 88-amino-acid polypeptide reads, in one-letter code: YcgL domain-containing protein NTHI1684 (88 aa).

One can recognise a YcgL domain in the interval 1–85 (MLCAIYKSKK…QDDGLFNSLS (85 aa)).

This chain is YcgL domain-containing protein NTHI1684, found in Haemophilus influenzae (strain 86-028NP).